A 220-amino-acid chain; its full sequence is Adenylate kinase (220 aa).

Position 10–15 (10–15 (GAGKGT)) interacts with ATP. The tract at residues 30–59 (STGDMLRAAVKAGSPLGVEAKGYMDAGKLV) is NMP. Residues Thr31, Arg36, 57–59 (KLV), 85–88 (GFPR), and Gln92 contribute to the AMP site. The tract at residues 122-159 (GRRTHAASGRTYHVKFNPPKVEGQDDVTGEPLIQRDDD) is LID. ATP contacts are provided by residues Arg123 and 132-133 (TY). AMP-binding residues include Arg156 and Arg167. Residue Gly206 participates in ATP binding.

The protein belongs to the adenylate kinase family. Monomer.

It localises to the cytoplasm. It catalyses the reaction AMP + ATP = 2 ADP. The protein operates within purine metabolism; AMP biosynthesis via salvage pathway; AMP from ADP: step 1/1. Its function is as follows. Catalyzes the reversible transfer of the terminal phosphate group between ATP and AMP. Plays an important role in cellular energy homeostasis and in adenine nucleotide metabolism. The sequence is that of Adenylate kinase from Burkholderia vietnamiensis (strain G4 / LMG 22486) (Burkholderia cepacia (strain R1808)).